The primary structure comprises 102 residues: MAKQKIRIRLKAFDHTILDQSAEKIVETAKTTGAKVAGPVPLPTEKDVVTILRSPHKYKDSREQFEIRTHKRLIDIISPSPKTVDALMRLDLPAGVDIEIKL.

This sequence belongs to the universal ribosomal protein uS10 family. As to quaternary structure, part of the 30S ribosomal subunit.

Involved in the binding of tRNA to the ribosomes. This chain is Small ribosomal subunit protein uS10, found in Clostridium acetobutylicum (strain ATCC 824 / DSM 792 / JCM 1419 / IAM 19013 / LMG 5710 / NBRC 13948 / NRRL B-527 / VKM B-1787 / 2291 / W).